A 339-amino-acid polypeptide reads, in one-letter code: DNA-directed RNA polymerase subunit alpha (339 aa).

Residues 1–235 (MVIQKNWQEL…DQLQVFVNFE (235 aa)) are alpha N-terminal domain (alpha-NTD). Positions 251 to 339 (FNPALLKKVD…DLAKRFEEHY (89 aa)) are alpha C-terminal domain (alpha-CTD).

The protein belongs to the RNA polymerase alpha chain family. As to quaternary structure, homodimer. The RNAP catalytic core consists of 2 alpha, 1 beta, 1 beta' and 1 omega subunit. When a sigma factor is associated with the core the holoenzyme is formed, which can initiate transcription.

It catalyses the reaction RNA(n) + a ribonucleoside 5'-triphosphate = RNA(n+1) + diphosphate. Its function is as follows. DNA-dependent RNA polymerase catalyzes the transcription of DNA into RNA using the four ribonucleoside triphosphates as substrates. This Methylorubrum extorquens (strain CM4 / NCIMB 13688) (Methylobacterium extorquens) protein is DNA-directed RNA polymerase subunit alpha.